A 105-amino-acid chain; its full sequence is MNRLKKGDDVIVIAGKDKGRRGVVKSFAKGGSLVLVEGINIVKKHIKPNPNRGIEGGVVEKELPVDASNVAIFNPATEKADRVGYKFVDEKKVRYFKSNGELVDL.

Belongs to the universal ribosomal protein uL24 family. Part of the 50S ribosomal subunit.

In terms of biological role, one of two assembly initiator proteins, it binds directly to the 5'-end of the 23S rRNA, where it nucleates assembly of the 50S subunit. Its function is as follows. One of the proteins that surrounds the polypeptide exit tunnel on the outside of the subunit. This Francisella tularensis subsp. novicida (strain U112) protein is Large ribosomal subunit protein uL24.